A 550-amino-acid chain; its full sequence is Arginine--tRNA ligase (550 aa).

Residues 130–140 (ANPTGPIHLGG) carry the 'HIGH' region motif.

It belongs to the class-I aminoacyl-tRNA synthetase family. Monomer.

It is found in the cytoplasm. It catalyses the reaction tRNA(Arg) + L-arginine + ATP = L-arginyl-tRNA(Arg) + AMP + diphosphate. The chain is Arginine--tRNA ligase from Rhodococcus opacus (strain B4).